A 366-amino-acid chain; its full sequence is Phospho-N-acetylmuramoyl-pentapeptide-transferase (366 aa).

Helical transmembrane passes span 27-47 (AALFTSALIVFLFGPAIISSL), 71-91 (TPTMGGLMILAGIVGSALLWA), 93-113 (LSSIYVVSTLLVTLGFGAIGF), 134-154 (LGIEFVIAAIAVFFMMQAAQS), 174-194 (LMLNLGYFFVLFGGFVIVGAG), 205-225 (GLAIVPVMIASAAFGLIAYLA), 245-265 (LAVILGAVIGAGLGFLWFNAP), 268-288 (AIFMGDTGSLALGGLIGTVAV), 297-317 (VIIGGLFVIETLSVIIQVFWF), and 343-363 (QVVIRFWIIAVILAMVGLSTL).

Belongs to the glycosyltransferase 4 family. MraY subfamily. The cofactor is Mg(2+).

It localises to the cell inner membrane. It carries out the reaction UDP-N-acetyl-alpha-D-muramoyl-L-alanyl-gamma-D-glutamyl-meso-2,6-diaminopimeloyl-D-alanyl-D-alanine + di-trans,octa-cis-undecaprenyl phosphate = di-trans,octa-cis-undecaprenyl diphospho-N-acetyl-alpha-D-muramoyl-L-alanyl-D-glutamyl-meso-2,6-diaminopimeloyl-D-alanyl-D-alanine + UMP. The protein operates within cell wall biogenesis; peptidoglycan biosynthesis. In terms of biological role, catalyzes the initial step of the lipid cycle reactions in the biosynthesis of the cell wall peptidoglycan: transfers peptidoglycan precursor phospho-MurNAc-pentapeptide from UDP-MurNAc-pentapeptide onto the lipid carrier undecaprenyl phosphate, yielding undecaprenyl-pyrophosphoryl-MurNAc-pentapeptide, known as lipid I. In Sinorhizobium fredii (strain NBRC 101917 / NGR234), this protein is Phospho-N-acetylmuramoyl-pentapeptide-transferase.